A 218-amino-acid polypeptide reads, in one-letter code: PKHD-type hydroxylase IL0759 (218 aa).

Residues 76–170 (QVARVTINRY…RLAMIGWVQS (95 aa)) enclose the Fe2OG dioxygenase domain. Residues His-94, Asp-96, and His-151 each coordinate Fe cation. Residue Arg-161 coordinates 2-oxoglutarate.

Fe(2+) serves as cofactor. Requires L-ascorbate as cofactor.

The polypeptide is PKHD-type hydroxylase IL0759 (Idiomarina loihiensis (strain ATCC BAA-735 / DSM 15497 / L2-TR)).